Here is a 59-residue protein sequence, read N- to C-terminus: MDKEVPKGSPREPALNIKKSDKSFKRKKPTENVLIFLINRQLGRHRSDIDLSRWVWMLS.

Over residues 1-10 (MDKEVPKGSP) the composition is skewed to basic and acidic residues. A disordered region spans residues 1 to 25 (MDKEVPKGSPREPALNIKKSDKSFK).

The chain is Embryonic testis differentiation protein homolog A from Homo sapiens (Human).